The chain runs to 265 residues: 3-methyl-2-oxobutanoate hydroxymethyltransferase (265 aa).

Mg(2+) contacts are provided by Asp45 and Asp84. 3-methyl-2-oxobutanoate contacts are provided by residues 45–46, Asp84, and Lys112; that span reads DS. A Mg(2+)-binding site is contributed by Glu114. Residue Glu181 is the Proton acceptor of the active site.

It belongs to the PanB family. In terms of assembly, homodecamer; pentamer of dimers. The cofactor is Mg(2+).

It is found in the cytoplasm. The enzyme catalyses 3-methyl-2-oxobutanoate + (6R)-5,10-methylene-5,6,7,8-tetrahydrofolate + H2O = 2-dehydropantoate + (6S)-5,6,7,8-tetrahydrofolate. The protein operates within cofactor biosynthesis; (R)-pantothenate biosynthesis; (R)-pantoate from 3-methyl-2-oxobutanoate: step 1/2. In terms of biological role, catalyzes the reversible reaction in which hydroxymethyl group from 5,10-methylenetetrahydrofolate is transferred onto alpha-ketoisovalerate to form ketopantoate. In Yersinia pestis bv. Antiqua (strain Antiqua), this protein is 3-methyl-2-oxobutanoate hydroxymethyltransferase.